Consider the following 349-residue polypeptide: Protein RecA (349 aa).

65–72 contacts ATP; that stretch reads GPESSGKT.

The protein belongs to the RecA family.

The protein localises to the cytoplasm. In terms of biological role, can catalyze the hydrolysis of ATP in the presence of single-stranded DNA, the ATP-dependent uptake of single-stranded DNA by duplex DNA, and the ATP-dependent hybridization of homologous single-stranded DNAs. It interacts with LexA causing its activation and leading to its autocatalytic cleavage. This is Protein RecA from Acinetobacter baumannii (strain AB307-0294).